The chain runs to 60 residues: Large ribosomal subunit protein uL30 (60 aa).

This sequence belongs to the universal ribosomal protein uL30 family. Part of the 50S ribosomal subunit.

The polypeptide is Large ribosomal subunit protein uL30 (Baumannia cicadellinicola subsp. Homalodisca coagulata).